The primary structure comprises 570 residues: Probable glucomannan 4-beta-mannosyltransferase 11 (570 aa).

The helical transmembrane segment at 57–77 (LAMTVMILAEKLFVAAVCLAV) threads the bilayer. Residue aspartate 157 is part of the active site. Residues aspartate 216 and aspartate 218 each contribute to the substrate site. The active site involves aspartate 310. 4 consecutive transmembrane segments (helical) span residues 389 to 409 (IAAH…SVWL), 412 to 432 (IEIP…CKAV), 522 to 542 (YSEI…VLYA), and 548 to 568 (IFLF…IGVC).

The protein belongs to the glycosyltransferase 2 family. Plant cellulose synthase-like A subfamily.

Its subcellular location is the golgi apparatus membrane. The catalysed reaction is GDP-mannose + (glucomannan)n = GDP + (glucomannan)n+1.. Probable mannan synthase which consists of a 4-beta-mannosyltransferase activity on mannan using GDP-mannose. The beta-1,4-mannan product is the backbone for galactomannan synthesis by galactomannan galactosyltransferase. Galactomannan is a noncellulosic polysaccharides of plant cell wall. The polypeptide is Probable glucomannan 4-beta-mannosyltransferase 11 (Oryza sativa subsp. japonica (Rice)).